The primary structure comprises 615 residues: MSETSSNSPASGSKEAVPKSLAGSTSNIPNELFVGPDGRPLSQNAQGASKSSSKVVPQALVPEDDIRAVEGILNYGGSNDNRPVSHTHTFVELQKSHQNHLTENDRNFGTSRLDDVAPNADGVRRLRTSGSSTGLSNAPPSANVSKASSNLSLASLAKTQPERATPEVCVPLNPDTGSVPLIHPEQTDRGLPYAPDEKFHNSGSLKLPKGASLEDLSRSPSRAVLNEDGNVDECAPPEPWENEYNEVLDDVENAVVGTSPLEYTSKPLAANRQRSTADLTESDNICGLTAGKSDPVTDVDESQTIDEQSIPEAEKGFYTKDGEGTAGLPFDIVSNLDIPNENAHESSRSKKKHTGPSLSSASQPSAASSSSSSEPSNLDKINDVKKNIEVSANEPQPRPVKEDVPKSQVGGETDTTDVINNSTPKEETEESPSTELPETGKEQPPNKAEPAVPTEASSTKPSEAAEESTPRFSVRPNKFTGSRAGFVAALESRLQKGPLMRSFVPNKSKSPSGTKSPASGETSEAGVKETETTTSSESALPDARKSRARGPVRRPPTSVNTKPSFSVSGIDVFLNLPQSSVMKKKGVETRKEVEPKEEAVIPEEDVEVEVETEEQ.

Polar residues-rich tracts occupy residues Met-1 to Ser-11, Leu-41 to Val-55, and Thr-128 to Pro-140. Disordered regions lie at residues Met-1–Val-61 and His-97–Ser-149. Phosphoserine is present on residues Ser-149 and Ser-152. The disordered stretch occupies residues Leu-181–Ser-217. 2 positions are modified to phosphoserine: Ser-219 and Ser-275. Disordered stretches follow at residues Lys-266 to Gly-481, Arg-493 to Phe-565, and Gly-586 to Gln-615. Positions Arg-272 to Asp-283 are enriched in polar residues. 2 positions are modified to phosphothreonine: Thr-276 and Thr-297. A compositionally biased stretch (basic and acidic residues) spans Glu-312–Glu-323. Positions Pro-356 to Ser-376 are enriched in low complexity. The span at Pro-505–Thr-522 shows a compositional bias: polar residues. Thr-514 bears the Phosphothreonine mark. Ser-516 carries the phosphoserine modification. Positions Gly-586–Ala-599 are enriched in basic and acidic residues. The segment covering Val-600 to Gln-615 has biased composition (acidic residues).

This is an uncharacterized protein from Schizosaccharomyces pombe (strain 972 / ATCC 24843) (Fission yeast).